A 469-amino-acid chain; its full sequence is Spliceosome-associated protein CWC27 homolog (469 aa).

Position 2 is an N-acetylserine (serine 2). The 156-residue stretch at 11–166 (TNGKVLLKTT…NPHRIKSCEV (156 aa)) folds into the PPIase cyclophilin-type domain. Basic and acidic residues predominate over residues 175–193 (TPREIKKPKNEKPEEEVKK). 2 disordered regions span residues 175-415 (TPRE…DDEG) and 428-469 (RKVK…KERR). A coiled-coil region spans residues 206–229 (SFGEEAEEEEEEVNRVSQSMKGRS). The segment covering 231 to 241 (SSHDLLKDDPH) has biased composition (basic and acidic residues). The span at 256-278 (TGDLEDDGEDDSAERDEYMEDDE) shows a compositional bias: acidic residues. 2 stretches are compositionally biased toward basic and acidic residues: residues 302-341 (GDGE…KVEE) and 356-368 (EYRR…EALR). Residues 309–371 (ASRSEELRKE…QKYEALRKQQ (63 aa)) adopt a coiled-coil conformation. Residues 384–403 (ALLSQFKSKLTQAITETPEN) are compositionally biased toward polar residues. Basic and acidic residues predominate over residues 454-469 (RREESKKLLREKKERR).

It belongs to the cyclophilin-type PPIase family. Part of the activated spliceosome B/catalytic step 1 spliceosome, one of the forms of the spliceosome which has a well-formed active site but still cannot catalyze the branching reaction and is composed at least of 52 proteins, the U2, U5 and U6 snRNAs and the pre-mRNA. Recruited during early steps of activated spliceosome B maturation, it is probably one of the first proteins released from this complex as he matures to the spliceosome C complex. Component of the minor spliceosome, which splices U12-type introns.

The protein resides in the nucleus. In terms of biological role, as part of the spliceosome, plays a role in pre-mRNA splicing. Probable inactive PPIase with no peptidyl-prolyl cis-trans isomerase activity. As a component of the minor spliceosome, involved in the splicing of U12-type introns in pre-mRNAs. This chain is Spliceosome-associated protein CWC27 homolog, found in Mus musculus (Mouse).